Consider the following 146-residue polypeptide: MQKTSMLTKEQANKRRQWYIVDAAGLVLGKLAVKAADLIRGKNKVDFTPNQDCGDYLIIINSDQVVLTGNKKENEFWYHHSQYIGGIKKVSGRDMLKKQSDKLVYNAVKGMLPDNRLSRRWITKVHVFKGDKHNMEAQKPTTLNWS.

This sequence belongs to the universal ribosomal protein uL13 family. As to quaternary structure, part of the 50S ribosomal subunit.

Its function is as follows. This protein is one of the early assembly proteins of the 50S ribosomal subunit, although it is not seen to bind rRNA by itself. It is important during the early stages of 50S assembly. The protein is Large ribosomal subunit protein uL13 of Mycoplasma pneumoniae (strain ATCC 29342 / M129 / Subtype 1) (Mycoplasmoides pneumoniae).